A 340-amino-acid polypeptide reads, in one-letter code: 4-hydroxy-3-methylbut-2-enyl diphosphate reductase (340 aa).

Position 19 (C19) interacts with [4Fe-4S] cluster. Positions 50 and 90 each coordinate (2E)-4-hydroxy-3-methylbut-2-enyl diphosphate. The dimethylallyl diphosphate site is built by H50 and H90. H50 and H90 together coordinate isopentenyl diphosphate. Position 112 (C112) interacts with [4Fe-4S] cluster. H141 is a binding site for (2E)-4-hydroxy-3-methylbut-2-enyl diphosphate. Residue H141 participates in dimethylallyl diphosphate binding. An isopentenyl diphosphate-binding site is contributed by H141. E143 (proton donor) is an active-site residue. Residue T190 participates in (2E)-4-hydroxy-3-methylbut-2-enyl diphosphate binding. C220 provides a ligand contact to [4Fe-4S] cluster. 4 residues coordinate (2E)-4-hydroxy-3-methylbut-2-enyl diphosphate: S248, S249, N250, and S292. Positions 248, 249, 250, and 292 each coordinate dimethylallyl diphosphate. Isopentenyl diphosphate-binding residues include S248, S249, N250, and S292.

The protein belongs to the IspH family. It depends on [4Fe-4S] cluster as a cofactor.

The enzyme catalyses isopentenyl diphosphate + 2 oxidized [2Fe-2S]-[ferredoxin] + H2O = (2E)-4-hydroxy-3-methylbut-2-enyl diphosphate + 2 reduced [2Fe-2S]-[ferredoxin] + 2 H(+). It carries out the reaction dimethylallyl diphosphate + 2 oxidized [2Fe-2S]-[ferredoxin] + H2O = (2E)-4-hydroxy-3-methylbut-2-enyl diphosphate + 2 reduced [2Fe-2S]-[ferredoxin] + 2 H(+). Its pathway is isoprenoid biosynthesis; dimethylallyl diphosphate biosynthesis; dimethylallyl diphosphate from (2E)-4-hydroxy-3-methylbutenyl diphosphate: step 1/1. It functions in the pathway isoprenoid biosynthesis; isopentenyl diphosphate biosynthesis via DXP pathway; isopentenyl diphosphate from 1-deoxy-D-xylulose 5-phosphate: step 6/6. In terms of biological role, catalyzes the conversion of 1-hydroxy-2-methyl-2-(E)-butenyl 4-diphosphate (HMBPP) into a mixture of isopentenyl diphosphate (IPP) and dimethylallyl diphosphate (DMAPP). Acts in the terminal step of the DOXP/MEP pathway for isoprenoid precursor biosynthesis. This chain is 4-hydroxy-3-methylbut-2-enyl diphosphate reductase, found in Thermus thermophilus (strain ATCC BAA-163 / DSM 7039 / HB27).